A 181-amino-acid chain; its full sequence is RNA pyrophosphohydrolase (181 aa).

One can recognise a Nudix hydrolase domain in the interval 6–149 (GFRPNVGIIL…KRRVYTRALQ (144 aa)). The Nudix box motif lies at 38–59 (GGIKAQETPEEALFRELEEEVG). The disordered stretch occupies residues 159–181 (GLPRQPPVGRPRRSAPPRGCRRA). Basic residues predominate over residues 168–181 (RPRRSAPPRGCRRA).

The protein belongs to the Nudix hydrolase family. RppH subfamily. Requires a divalent metal cation as cofactor.

Accelerates the degradation of transcripts by removing pyrophosphate from the 5'-end of triphosphorylated RNA, leading to a more labile monophosphorylated state that can stimulate subsequent ribonuclease cleavage. The protein is RNA pyrophosphohydrolase of Alkalilimnicola ehrlichii (strain ATCC BAA-1101 / DSM 17681 / MLHE-1).